A 126-amino-acid chain; its full sequence is Aspartate 1-decarboxylase (126 aa).

Catalysis depends on Ser-25, which acts as the Schiff-base intermediate with substrate; via pyruvic acid. Pyruvic acid (Ser) is present on Ser-25. Thr-57 contacts substrate. The active-site Proton donor is the Tyr-58. A substrate-binding site is contributed by 73 to 75 (GAA).

The protein belongs to the PanD family. As to quaternary structure, heterooctamer of four alpha and four beta subunits. Pyruvate is required as a cofactor. Post-translationally, is synthesized initially as an inactive proenzyme, which is activated by self-cleavage at a specific serine bond to produce a beta-subunit with a hydroxyl group at its C-terminus and an alpha-subunit with a pyruvoyl group at its N-terminus.

The protein localises to the cytoplasm. It carries out the reaction L-aspartate + H(+) = beta-alanine + CO2. It participates in cofactor biosynthesis; (R)-pantothenate biosynthesis; beta-alanine from L-aspartate: step 1/1. Functionally, catalyzes the pyruvoyl-dependent decarboxylation of aspartate to produce beta-alanine. This chain is Aspartate 1-decarboxylase, found in Psychrobacter arcticus (strain DSM 17307 / VKM B-2377 / 273-4).